The chain runs to 200 residues: Thymidine kinase (200 aa).

Residues Ser-9–Ser-16 and Asp-88–His-91 contribute to the ATP site. Glu-89 functions as the Proton acceptor in the catalytic mechanism. Positions 146, 148, 183, and 186 each coordinate Zn(2+).

This sequence belongs to the thymidine kinase family. Homotetramer.

It is found in the cytoplasm. The enzyme catalyses thymidine + ATP = dTMP + ADP + H(+). This Rhizobium etli (strain ATCC 51251 / DSM 11541 / JCM 21823 / NBRC 15573 / CFN 42) protein is Thymidine kinase.